A 327-amino-acid polypeptide reads, in one-letter code: tRNA N6-adenosine threonylcarbamoyltransferase (327 aa).

Fe cation-binding residues include histidine 109 and histidine 113. Residues 132 to 136 (MVSGG), aspartate 165, glycine 178, aspartate 182, and asparagine 268 contribute to the substrate site. Aspartate 296 provides a ligand contact to Fe cation.

The protein belongs to the KAE1 / TsaD family. Requires Fe(2+) as cofactor.

It is found in the cytoplasm. The catalysed reaction is L-threonylcarbamoyladenylate + adenosine(37) in tRNA = N(6)-L-threonylcarbamoyladenosine(37) in tRNA + AMP + H(+). Required for the formation of a threonylcarbamoyl group on adenosine at position 37 (t(6)A37) in tRNAs that read codons beginning with adenine. Is involved in the transfer of the threonylcarbamoyl moiety of threonylcarbamoyl-AMP (TC-AMP) to the N6 group of A37, together with TsaE and TsaB. TsaD likely plays a direct catalytic role in this reaction. This chain is tRNA N6-adenosine threonylcarbamoyltransferase, found in Thermotoga petrophila (strain ATCC BAA-488 / DSM 13995 / JCM 10881 / RKU-1).